A 402-amino-acid polypeptide reads, in one-letter code: MKLMTMPSEFQKALPILTKIKEAGYEAYFVGGSVRDVLLGRPIHDVDIATSSYPEETKAIFNRTVDVGIEHGTVLVLENGGEYEITTFRTEDVYVDYRRPSQVSFVRSLEEDLKRRDFTVNALALDENGQVIDKFRGLIDLKQKRLRAVGKAEERFEEDALRIMRGFRFAASLDFDIEATTFEAMRSHSPLLEKISVERSFTEFDKLLMAPHWRKGISAMIACQAYDYLPGLKQQEAGLNHLIVSLKDNFTFSDHHQAWAYVMISLAIEDPKSFLKAWKTSNDFQRYVTKLIALYRIRQERSFEKLDIYQYGKKMASLVEDLRKAQSLSVDMDHINTLDQALVIHDKHDIVLNGSHLIKDFGMKPGPQLGLMLEKVELAIVEGRLDNDFTTIEAFVREELAT.

Residues G32 and R35 each coordinate ATP. Positions 32 and 35 each coordinate CTP. Mg(2+)-binding residues include D45 and D47. ATP is bound by residues R116, D159, R162, R165, and R168. R116, D159, R162, R165, and R168 together coordinate CTP.

Belongs to the tRNA nucleotidyltransferase/poly(A) polymerase family. Bacterial CCA-adding enzyme type 3 subfamily. As to quaternary structure, homodimer. Mg(2+) serves as cofactor.

The enzyme catalyses a tRNA precursor + 2 CTP + ATP = a tRNA with a 3' CCA end + 3 diphosphate. The catalysed reaction is a tRNA with a 3' CCA end + 2 CTP + ATP = a tRNA with a 3' CCACCA end + 3 diphosphate. Catalyzes the addition and repair of the essential 3'-terminal CCA sequence in tRNAs without using a nucleic acid template. Adds these three nucleotides in the order of C, C, and A to the tRNA nucleotide-73, using CTP and ATP as substrates and producing inorganic pyrophosphate. tRNA 3'-terminal CCA addition is required both for tRNA processing and repair. Also involved in tRNA surveillance by mediating tandem CCA addition to generate a CCACCA at the 3' terminus of unstable tRNAs. While stable tRNAs receive only 3'-terminal CCA, unstable tRNAs are marked with CCACCA and rapidly degraded. This Streptococcus pyogenes serotype M2 (strain MGAS10270) protein is CCA-adding enzyme.